The sequence spans 398 residues: Galactose-3-O-sulfotransferase 2 (398 aa).

The Cytoplasmic portion of the chain corresponds to 1–11 (MLSALGGLQRC). Residues 12–29 (FWAILLLALTVSLLAGFL) traverse the membrane as a helical; Signal-anchor for type II membrane protein segment. Over 30-398 (HKDVRLLMPL…PPKNIPFLGA (369 aa)) the chain is Lumenal. N77, N133, N180, N288, N330, and N360 each carry an N-linked (GlcNAc...) asparagine glycan.

It belongs to the galactose-3-O-sulfotransferase family.

The protein resides in the golgi apparatus. It is found in the golgi stack membrane. Its pathway is protein modification; carbohydrate sulfation. Its activity is regulated as follows. Strongly inhibited by Cu(2+) and Zn(2+). Transfers a sulfate group to the hydroxyl group at C3 of non-reducing beta-galactosyl residues. Acts both on type 1 (Gal-beta-1,3-GlcNAc) and type 2 (Gal-beta-1,4-GlcNAc) chains with similar efficiency. The protein is Galactose-3-O-sulfotransferase 2 (GAL3ST2) of Sus scrofa (Pig).